The following is a 618-amino-acid chain: Dihydroxy-acid dehydratase (618 aa).

Asp81 serves as a coordination point for Mg(2+). A [2Fe-2S] cluster-binding site is contributed by Cys122. Residues Asp123 and Lys124 each coordinate Mg(2+). The residue at position 124 (Lys124) is an N6-carboxylysine. Position 199 (Cys199) interacts with [2Fe-2S] cluster. Position 495 (Glu495) interacts with Mg(2+). The Proton acceptor role is filled by Ser521.

It belongs to the IlvD/Edd family. Homodimer. It depends on [2Fe-2S] cluster as a cofactor. The cofactor is Mg(2+).

It catalyses the reaction (2R)-2,3-dihydroxy-3-methylbutanoate = 3-methyl-2-oxobutanoate + H2O. The catalysed reaction is (2R,3R)-2,3-dihydroxy-3-methylpentanoate = (S)-3-methyl-2-oxopentanoate + H2O. It functions in the pathway amino-acid biosynthesis; L-isoleucine biosynthesis; L-isoleucine from 2-oxobutanoate: step 3/4. It participates in amino-acid biosynthesis; L-valine biosynthesis; L-valine from pyruvate: step 3/4. In terms of biological role, functions in the biosynthesis of branched-chain amino acids. Catalyzes the dehydration of (2R,3R)-2,3-dihydroxy-3-methylpentanoate (2,3-dihydroxy-3-methylvalerate) into 2-oxo-3-methylpentanoate (2-oxo-3-methylvalerate) and of (2R)-2,3-dihydroxy-3-methylbutanoate (2,3-dihydroxyisovalerate) into 2-oxo-3-methylbutanoate (2-oxoisovalerate), the penultimate precursor to L-isoleucine and L-valine, respectively. This Blochmanniella floridana protein is Dihydroxy-acid dehydratase.